Here is a 588-residue protein sequence, read N- to C-terminus: Protein gamma response 1 (588 aa).

2 coiled-coil regions span residues 64 to 104 (AACD…LGKT) and 164 to 281 (SEVK…KTVV). Basic and acidic residues-rich tracts occupy residues 377–389 (KHSE…DKVR), 465–484 (NVKR…KKDD), and 508–525 (TSKK…KAER). 2 disordered regions span residues 377–398 (KHSE…SGNN) and 417–525 (PIVR…KAER).

As to expression, basal levels in mitotically dividing cells (meristems), and high levels in endoreduplicating cells (stipules, trichomes) (at protein level).

Its subcellular location is the nucleus. Functionally, seems to mediate cell cycle arrest before mitosis in response to DNA damage. Is probably also involved in the transition from mitosis to endoreduplication. The sequence is that of Protein gamma response 1 (GR1) from Arabidopsis thaliana (Mouse-ear cress).